We begin with the raw amino-acid sequence, 291 residues long: Basic helix-loop-helix protein 80 (291 aa).

The interval 65-120 (SAVLDTSPSVDRKRKAAEDSAHSKDSCKDGKSRRGKKASKEVEEKSTTEDEPPKGY) is disordered. Over residues 80-117 (AAEDSAHSKDSCKDGKSRRGKKASKEVEEKSTTEDEPP) the composition is skewed to basic and acidic residues. Residues 125 to 132 (ARRGQATD) carry the Nuclear localization signal motif. Positions 129–142 (QATDSHSLAERVRR) are basic motif; degenerate. The bHLH domain maps to 129–179 (QATDSHSLAERVRRERISERMRMLQALVPGCDKVTGKALILDEIINYVQSL). The interval 143–179 (ERISERMRMLQALVPGCDKVTGKALILDEIINYVQSL) is helix-loop-helix motif.

The protein belongs to the bHLH protein family. In terms of assembly, homodimer. Interacts with IBH1, BC1 and LO9-177.

Its subcellular location is the nucleus. Its function is as follows. Together with BCL2, positive regulator of cell elongation at least partially through increased gibberellic acid (GA) biosynthesis. The protein is Basic helix-loop-helix protein 80 of Oryza sativa subsp. indica (Rice).